The sequence spans 179 residues: ATP-dependent protease subunit HslV (179 aa).

T7 is a catalytic residue. Residues G162, C165, and T168 each contribute to the Na(+) site.

The protein belongs to the peptidase T1B family. HslV subfamily. In terms of assembly, a double ring-shaped homohexamer of HslV is capped on each side by a ring-shaped HslU homohexamer. The assembly of the HslU/HslV complex is dependent on binding of ATP.

It localises to the cytoplasm. It carries out the reaction ATP-dependent cleavage of peptide bonds with broad specificity.. Allosterically activated by HslU binding. Functionally, protease subunit of a proteasome-like degradation complex believed to be a general protein degrading machinery. The protein is ATP-dependent protease subunit HslV of Saccharophagus degradans (strain 2-40 / ATCC 43961 / DSM 17024).